A 241-amino-acid chain; its full sequence is Methylthioribulose-1-phosphate dehydratase (241 aa).

Residues 1–20 form a disordered region; that stretch reads MSAIKDERNNDHLVQSHDPE. Substrate is bound at residue C100. H117 and H119 together coordinate Zn(2+). E146 serves as the catalytic Proton donor/acceptor. H202 lines the Zn(2+) pocket.

This sequence belongs to the aldolase class II family. MtnB subfamily. It depends on Zn(2+) as a cofactor.

It is found in the cytoplasm. The enzyme catalyses 5-(methylsulfanyl)-D-ribulose 1-phosphate = 5-methylsulfanyl-2,3-dioxopentyl phosphate + H2O. It functions in the pathway amino-acid biosynthesis; L-methionine biosynthesis via salvage pathway; L-methionine from S-methyl-5-thio-alpha-D-ribose 1-phosphate: step 2/6. Its function is as follows. Catalyzes the dehydration of methylthioribulose-1-phosphate (MTRu-1-P) into 2,3-diketo-5-methylthiopentyl-1-phosphate (DK-MTP-1-P). The chain is Methylthioribulose-1-phosphate dehydratase from Blastomyces gilchristii (strain SLH14081) (Blastomyces dermatitidis).